Reading from the N-terminus, the 233-residue chain is 7-cyano-7-deazaguanine synthase (233 aa).

ATP is bound at residue 13–23; the sequence is LSGGLDSATAM. Residues cysteine 197, cysteine 207, cysteine 210, and cysteine 213 each coordinate Zn(2+).

This sequence belongs to the QueC family. Zn(2+) is required as a cofactor.

The catalysed reaction is 7-carboxy-7-deazaguanine + NH4(+) + ATP = 7-cyano-7-deazaguanine + ADP + phosphate + H2O + H(+). Its pathway is purine metabolism; 7-cyano-7-deazaguanine biosynthesis. Catalyzes the ATP-dependent conversion of 7-carboxy-7-deazaguanine (CDG) to 7-cyano-7-deazaguanine (preQ(0)). The protein is 7-cyano-7-deazaguanine synthase of Desulfatibacillum aliphaticivorans.